We begin with the raw amino-acid sequence, 446 residues long: Exodeoxyribonuclease 7 large subunit (446 aa).

It belongs to the XseA family. As to quaternary structure, heterooligomer composed of large and small subunits.

Its subcellular location is the cytoplasm. The enzyme catalyses Exonucleolytic cleavage in either 5'- to 3'- or 3'- to 5'-direction to yield nucleoside 5'-phosphates.. Bidirectionally degrades single-stranded DNA into large acid-insoluble oligonucleotides, which are then degraded further into small acid-soluble oligonucleotides. The chain is Exodeoxyribonuclease 7 large subunit from Vibrio cholerae serotype O1 (strain ATCC 39541 / Classical Ogawa 395 / O395).